The following is a 198-amino-acid chain: Transcription factor LBX2 (198 aa).

3 disordered regions span residues 24–46 (MVPRAPSAPQLPESGPGPTSPLC), 63–89 (ALQPSEGRAGPDALGPGPFGRKRRKSR), and 173–198 (DPGLCLGPAGPDSRPHLSDEEIQVDD). Positions 85-144 (RRKSRTAFTAQQVLELERRFVFQKYLAPSERDGLATRLGLANAQVVTWFQNRRAKLKRDV) form a DNA-binding region, homeobox.

The protein resides in the nucleus. In terms of biological role, transcription factor. In Homo sapiens (Human), this protein is Transcription factor LBX2 (LBX2).